We begin with the raw amino-acid sequence, 295 residues long: Aspartate carbamoyltransferase catalytic subunit (295 aa).

The carbamoyl phosphate site is built by Arg-49 and Thr-50. Lys-77 provides a ligand contact to L-aspartate. Carbamoyl phosphate is bound by residues Arg-99, His-127, and Gln-130. Residues Arg-161 and Arg-212 each contribute to the L-aspartate site. The carbamoyl phosphate site is built by Gly-251 and Pro-252.

Belongs to the aspartate/ornithine carbamoyltransferase superfamily. ATCase family. In terms of assembly, heterododecamer (2C3:3R2) of six catalytic PyrB chains organized as two trimers (C3), and six regulatory PyrI chains organized as three dimers (R2).

The catalysed reaction is carbamoyl phosphate + L-aspartate = N-carbamoyl-L-aspartate + phosphate + H(+). The protein operates within pyrimidine metabolism; UMP biosynthesis via de novo pathway; (S)-dihydroorotate from bicarbonate: step 2/3. In terms of biological role, catalyzes the condensation of carbamoyl phosphate and aspartate to form carbamoyl aspartate and inorganic phosphate, the committed step in the de novo pyrimidine nucleotide biosynthesis pathway. The chain is Aspartate carbamoyltransferase catalytic subunit from Campylobacter jejuni subsp. jejuni serotype O:23/36 (strain 81-176).